The chain runs to 1135 residues: Exportin-5 (1135 aa).

An Importin N-terminal domain is found at 32–117 (SQVFLEEIKT…KEKLVTILVD (86 aa)). Residues 630-631 (TE) are pre-siRNA binding.

It belongs to the exportin family. In terms of assembly, found in a nuclear export complex with RanGTP, exportin and pre-miRNA.

It localises to the nucleus. It is found in the cytoplasm. In terms of biological role, mediates the nuclear export of proteins bearing a double-stranded RNA binding domain (dsRBD) and double-stranded RNAs (cargos). Mediates the nuclear export of micro-RNA precursors, which form short hairpins. The protein is Exportin-5 (xpo5) of Dictyostelium discoideum (Social amoeba).